Reading from the N-terminus, the 324-residue chain is DGAT1/2-independent enzyme synthesizing storage lipids (324 aa).

Residues 1 to 50 (MIDKNQTCGVGQDSVPYMICLIHILEEWFGVEQLEDYLNFANYLLWVFTP) lie on the Lumenal side of the membrane. Asn-5 carries N-linked (GlcNAc...) asparagine glycosylation. A helical transmembrane segment spans residues 51–71 (LILLILPYFTIFLLYLTIIFL). The Cytoplasmic portion of the chain corresponds to 72-125 (HIYKRKNVLKEAYSHNLWDGARKTVATLWDGHAAVWHGYEVHGMEKIPEDGPAL). A helical transmembrane segment spans residues 126 to 146 (IIFYHGAIPIDFYYFMAKIFI). The active site involves His-130. The Lumenal portion of the chain corresponds to 147–324 (HKGRTCRVVA…IMSALLERFH (178 aa)).

Belongs to the diacylglycerol acyltransferase family. Highly divergent.

Its subcellular location is the endoplasmic reticulum membrane. The catalysed reaction is a 1,2-diacylglycerol + a 1,2-diacyl-sn-glycero-3-phosphocholine = a triacylglycerol + a 1-acyl-sn-glycero-3-phosphocholine. It catalyses the reaction a 1-O-alkyl-2-acyl-sn-glycero-3-phosphocholine + a 1,2-diacylglycerol = a 1-O-alkyl-sn-glycero-3-phosphocholine + a triacylglycerol. The enzyme catalyses a 2-acylglycerol + an acyl-CoA = a 1,2-diacylglycerol + CoA. It carries out the reaction an acyl-CoA + a 1,2-diacyl-sn-glycerol = a triacyl-sn-glycerol + CoA. The catalysed reaction is 2-(9Z-octadecenoyl)-glycerol + (9Z)-octadecenoyl-CoA = 1,2-di-(9Z-octadecenoyl)-glycerol + CoA. It catalyses the reaction 1,2-di-(9Z-octadecenoyl)-sn-glycerol + (9Z)-octadecenoyl-CoA = 1,2,3-tri-(9Z-octadecenoyl)-glycerol + CoA. Its activity is regulated as follows. Acyltransferase activity is specifically inhibited by TMX1 at the endoplasmic reticulum, restricting accumulation of triacylglycerol. Its function is as follows. Catalytic subunit of the alternative triglyceride biosynthesis pathway, which mediates formation of triacylglycerol from diacylglycerol and membrane phospholipids. Synthesizes triacylglycerol at the expense of membrane phospholipids, such as phosphatidylcholine (PC) and its ether-linked form (ePC), thereby altering the composition of membranes. The alternative triglyceride biosynthesis pathway is probably required to provide the energy required for rapid growth when fuel sources are limiting. It maintains mitochondrial function during periods of extracellular lipid starvation. Can also use acyl-CoA as donor: acts as a acyl-CoA:monoacylglycerol acyltransferase (MGAT), but also shows acyl-CoA:diacylglycerol acyltransferase (DGAT) activity. This chain is DGAT1/2-independent enzyme synthesizing storage lipids, found in Homo sapiens (Human).